Here is a 353-residue protein sequence, read N- to C-terminus: UPF0283 membrane protein YPA_1696 (353 aa).

The next 3 helical transmembrane spans lie at 71-91 (MVTA…VQWV), 101-121 (IALG…GSVV), and 214-234 (ESAL…FIAW).

Belongs to the UPF0283 family.

It localises to the cell inner membrane. The sequence is that of UPF0283 membrane protein YPA_1696 from Yersinia pestis bv. Antiqua (strain Antiqua).